Reading from the N-terminus, the 95-residue chain is Large ribosomal subunit protein bL27 (95 aa).

A propeptide spanning residues 1-6 (MKLQLF) is cleaved from the precursor. Residues 1-25 (MKLQLFAHKKGVGSSRNGRDSESKR) are disordered.

This sequence belongs to the bacterial ribosomal protein bL27 family. In terms of processing, the N-terminus is cleaved by ribosomal processing cysteine protease Prp.

The sequence is that of Large ribosomal subunit protein bL27 from Thermoanaerobacter pseudethanolicus (strain ATCC 33223 / 39E) (Clostridium thermohydrosulfuricum).